The following is a 220-amino-acid chain: Deoxyribose-phosphate aldolase (220 aa).

Asp-89 acts as the Proton donor/acceptor in catalysis. Lys-151 serves as the catalytic Schiff-base intermediate with acetaldehyde. Catalysis depends on Lys-180, which acts as the Proton donor/acceptor.

It belongs to the DeoC/FbaB aldolase family. DeoC type 1 subfamily.

The protein resides in the cytoplasm. It catalyses the reaction 2-deoxy-D-ribose 5-phosphate = D-glyceraldehyde 3-phosphate + acetaldehyde. It participates in carbohydrate degradation; 2-deoxy-D-ribose 1-phosphate degradation; D-glyceraldehyde 3-phosphate and acetaldehyde from 2-deoxy-alpha-D-ribose 1-phosphate: step 2/2. Functionally, catalyzes a reversible aldol reaction between acetaldehyde and D-glyceraldehyde 3-phosphate to generate 2-deoxy-D-ribose 5-phosphate. This chain is Deoxyribose-phosphate aldolase, found in Streptococcus pneumoniae serotype 2 (strain D39 / NCTC 7466).